We begin with the raw amino-acid sequence, 431 residues long: Protein PIN-LIKES 6 (431 aa).

The Lumenal portion of the chain corresponds to 1-29 (MIARILAALADSMEMPVAAGGGSVLGTIK). Residues 30-50 (IAVMPIAKVFTMCFLGLLMAS) traverse the membrane as a helical segment. The Cytoplasmic portion of the chain corresponds to 51–66 (KYVNILPPSGRKLLNG). Residues 67–87 (LVFSLLLPCLIFSQLGQAVTL) traverse the membrane as a helical segment. Residues 88-93 (QKMLQW) lie on the Lumenal side of the membrane. The chain crosses the membrane as a helical span at residues 94-114 (WFIPVNVVLGTISGSIIGFIV). Over 115-128 (ASIVRPPYPYFKFT) the chain is Cytoplasmic. A helical transmembrane segment spans residues 129–149 (IIQIGVGNIGNVPLVLLAALC). At 150–169 (RDTSNPFGDSEKCSIDGTAY) the chain is on the lumenal side. The helical transmembrane segment at 170-190 (ISFGQWVGAIILYTYVYQMFA) threads the bilayer. Residues 191-268 (PPPEGFDAEE…FLYEKLKLKQ (78 aa)) are Cytoplasmic-facing. A helical transmembrane segment spans residues 269 to 289 (IVQPAIVASILAMILGAIPFT). Over 290 to 306 (KKLIFTNGAPLFFFTDS) the chain is Lumenal. A helical membrane pass occupies residues 307–327 (CMILGDAMIPCILLALGGNLI). The Cytoplasmic segment spans residues 328-340 (NGPGSSKLGFKTT). Residues 341–361 (AAIIIGRLVLVPPVGLGIVTV) traverse the membrane as a helical segment. At 362 to 376 (ADKLGFLPADDKMFR) the chain is on the lumenal side. The chain crosses the membrane as a helical span at residues 377–397 (FVLLLQHTMPTSVLSGAVANL). At 398–406 (RGCGRESAA) the chain is on the cytoplasmic side. Residues 407–427 (VLFWVHIFAIFSMAGWMVLYI) traverse the membrane as a helical segment. At 428–431 (NILF) the chain is on the lumenal side.

Belongs to the auxin efflux carrier (TC 2.A.69.2) family. In terms of tissue distribution, expressed in seedlings, rosette and cauline leaves, stems and flowers.

It is found in the endoplasmic reticulum membrane. Functionally, involved in cellular auxin homeostasis by regulating auxin metabolism. Regulates intracellular auxin accumulation at the endoplasmic reticulum and thus auxin availability for nuclear auxin signaling. The sequence is that of Protein PIN-LIKES 6 from Arabidopsis thaliana (Mouse-ear cress).